The chain runs to 574 residues: Man(5)GlcNAc(2)-PP-dolichol translocation protein RFT1 (574 aa).

At 1–24 (MAKKNSQLPSTSEQILERSTTGAT) the chain is on the lumenal side. Residues 25–45 (FLMMGQLFTKLVTFILNNLLI) form a helical membrane-spanning segment. Residues 46–48 (RFL) lie on the Cytoplasmic side of the membrane. The helical transmembrane segment at 49–69 (SPRIFGITAFLEFIQGTVLFF) threads the bilayer. At 70-110 (SRDAIRLSTLRISDSGNGIIDDDDEEEYQETHYKSKVLQTA) the chain is on the lumenal side. The helical transmembrane segment at 111–131 (VNFAYIPFWIGFPLSIGLIAW) threads the bilayer. Residues 132–148 (QYRNINAYFITLPFFRW) lie on the Cytoplasmic side of the membrane. A helical transmembrane segment spans residues 149 to 169 (SIFLIWLSIIVELLSEPFFIV). The Lumenal segment spans residues 170–181 (NQFMLNYAARSR). The helical transmembrane segment at 182–202 (FESIAVTTGCIVNFIVVYAVQ) threads the bilayer. Over 203-218 (QSRYPMGVVTSDIDKE) the chain is Cytoplasmic. A helical transmembrane segment spans residues 219-239 (GIAILAFALGKLAHSITLLAC). Residues 240–319 (YYWDYLKNFK…INSLCTVEEQ (80 aa)) lie on the Lumenal side of the membrane. A helical transmembrane segment spans residues 320-340 (GIYALLSNYGSLLTRLLFAPI). Over 341 to 372 (EESLRLFLARLLSSHNPKNLKLSIEVLVNLTR) the chain is Cytoplasmic. A helical transmembrane segment spans residues 373 to 393 (FYIYLSLMIIVFGPANSSFLL). The Lumenal portion of the chain corresponds to 394 to 413 (QFLIGSKWSTTSVLDTIRVY). The helical transmembrane segment at 414–434 (CFYIPFLSLNGIFEAFFQSVA) threads the bilayer. At 435 to 443 (TGDQILKHS) the chain is on the cytoplasmic side. Residues 444-464 (YFMMAFSGIFLLNSWLLIEKL) form a helical membrane-spanning segment. Residues 465–469 (KLSIE) are Lumenal-facing. The helical transmembrane segment at 470–490 (GLILSNIINMVLRILYCGVFL) threads the bilayer. The Cytoplasmic segment spans residues 491–509 (NKFHRELFTDSSFFFNFKD). Residues 510-530 (FKTVIIAGSTICLLDWWFIGY) form a helical membrane-spanning segment. Topologically, residues 531-532 (VK) are lumenal. Residues 533-553 (NLQQFVVNVLFAMGLLALILV) form a helical membrane-spanning segment. At 554–574 (KERQTIQSFINKRAVSNSKDV) the chain is on the cytoplasmic side.

Belongs to the RFT1 family.

The protein localises to the endoplasmic reticulum membrane. It functions in the pathway protein modification; protein glycosylation. Its function is as follows. Intramembrane glycolipid transporter that operates in the biosynthetic pathway of dolichol-linked oligosaccharides, the glycan precursors employed in protein asparagine (N)-glycosylation. The sequential addition of sugars to dolichol pyrophosphate produces dolichol-linked oligosaccharides containing fourteen sugars, including two GlcNAcs, nine mannoses and three glucoses. Once assembled, the oligosaccharide is transferred from the lipid to nascent proteins by oligosaccharyltransferases. The assembly of dolichol-linked oligosaccharides begins on the cytosolic side of the endoplasmic reticulum membrane and finishes in its lumen. RFT1 could mediate the translocation of the cytosolically oriented intermediate DolPP-GlcNAc2Man5, produced by ALG11, into the ER lumen where dolichol-linked oligosaccharides assembly continues. However, the intramembrane lipid transporter activity could not be confirmed in vitro. The chain is Man(5)GlcNAc(2)-PP-dolichol translocation protein RFT1 from Saccharomyces cerevisiae (strain ATCC 204508 / S288c) (Baker's yeast).